A 324-amino-acid chain; its full sequence is Glyoxylate/hydroxypyruvate reductase B (324 aa).

Residues Arg237 and Glu266 contribute to the active site. His285 (proton donor) is an active-site residue.

This sequence belongs to the D-isomer specific 2-hydroxyacid dehydrogenase family. GhrB subfamily. Homodimer.

It localises to the cytoplasm. The catalysed reaction is glycolate + NADP(+) = glyoxylate + NADPH + H(+). It carries out the reaction (R)-glycerate + NAD(+) = 3-hydroxypyruvate + NADH + H(+). It catalyses the reaction (R)-glycerate + NADP(+) = 3-hydroxypyruvate + NADPH + H(+). Functionally, catalyzes the NADPH-dependent reduction of glyoxylate and hydroxypyruvate into glycolate and glycerate, respectively. In Escherichia coli O17:K52:H18 (strain UMN026 / ExPEC), this protein is Glyoxylate/hydroxypyruvate reductase B.